The primary structure comprises 240 residues: LexA repressor (240 aa).

The segment at residues 26-46 is a DNA-binding region (H-T-H motif); it reads FDEMKDALDLASKSGIHRLIT. Residues S160 and K198 each act as for autocatalytic cleavage activity in the active site.

Belongs to the peptidase S24 family. In terms of assembly, homodimer.

It catalyses the reaction Hydrolysis of Ala-|-Gly bond in repressor LexA.. Represses a number of genes involved in the response to DNA damage (SOS response), including recA and lexA. In the presence of single-stranded DNA, RecA interacts with LexA causing an autocatalytic cleavage which disrupts the DNA-binding part of LexA, leading to derepression of the SOS regulon and eventually DNA repair. The chain is LexA repressor from Agrobacterium fabrum (strain C58 / ATCC 33970) (Agrobacterium tumefaciens (strain C58)).